Consider the following 385-residue polypeptide: Flavin-dependent monooxygenase (385 aa).

Residues 12–15 (ASIA), 34–36 (EKN), 44–47 (YAID), Arg-105, Tyr-267, Asp-289, and 296–302 (PLSGQGT) contribute to the FAD site.

It belongs to the aromatic-ring hydroxylase family. FAD is required as a cofactor.

It carries out the reaction 7-chlorotetracycline + NADPH + O2 + H(+) = (1S,10S,10aS)-3-(CONH2)-9-Cl-1-(Me2N)-3,3a,4,10-(HO)4-10-Me-2,5-dioxo-1H,10aH,11H,11aH-cyclopenta[b]anthracen-6-olate + CO + NADP(+) + H2O. The enzyme catalyses a tetracycline + NADPH + O2 + H(+) = a (1S,10aS)-3-(CONH2)-1-(Me2N)-3,3a,4,6-(HO)4-2,5-dioxo-1H,10aH,11H,11aH-cyclopenta[b]anthracene + CO + NADP(+) + H2O. With respect to regulation, inhibited by anhydrotetracycline. An FAD-requiring monooxygenase active on tetracycline antibiotic and some of its derivatives, which leads to their inactivation. Expression in E.coli confers high resistance to oxytetracycline, slightly less resistance to tetracycline, moderate resistance to minocycline but no resistance to tigecycline. Degrades tetracycline and oxytetracycline; the reaction requires NADPH. Degrades and confers resistance to chlortetracycline. The polypeptide is Flavin-dependent monooxygenase (Unknown prokaryotic organism).